The following is a 1033-amino-acid chain: Potassium-transporting ATPase alpha chain 2 (1033 aa).

Topologically, residues 1 to 96 are cytoplasmic; sequence MRRKTLEIYS…NALSPPKQTP (96 aa). The helical transmembrane segment at 97–117 threads the bilayer; that stretch reads EIIKFLKQMIGGFSILLWVGA. At 118 to 140 the chain is on the lumenal side; it reads ILCWIAYGIQYASNQSGSLDNVY. A helical transmembrane segment spans residues 141 to 161; sequence LGVVLALVVILTGIFAYYQEA. Over 162–297 the chain is Cytoplasmic; sequence KSTNIMSSFS…NEKTPIATEI (136 aa). The helical transmembrane segment at 298 to 317 threads the bilayer; sequence EHFVHIVAGVAVSIGILFFI. Topologically, residues 318 to 329 are lumenal; the sequence is IAVSLKYRVLDS. The chain crosses the membrane as a helical span at residues 330-347; it reads IIFLIGIIVANVPEGLLA. At 348–781 the chain is on the cytoplasmic side; that stretch reads TVTVTLSLTA…EEGRLIFDNL (434 aa). The 4-aspartylphosphate intermediate role is filled by Asp385. Mg(2+) contacts are provided by Asp726 and Asp730. Residues 782–801 form a helical membrane-spanning segment; sequence KKTIAYTLTKNIAELCPFLV. At 802–811 the chain is on the lumenal side; that stretch reads YIIVGLPLPI. The helical transmembrane segment at 812-832 threads the bilayer; the sequence is GTITILFIDLGTDIIPSIALA. Residues 833–852 are Cytoplasmic-facing; sequence YEKVESDIMNRKPRHKKKDR. Residues 853 to 875 form a helical membrane-spanning segment; sequence LVNHQLAIYSYLHIGLMQALGAF. The Lumenal portion of the chain corresponds to 876 to 927; that stretch reads LVYFTVYAQQGFWPTSLIQLRVKWEQDYVNDLEDSYGQQWTRYQRKYLEWTG. Residues 928 to 947 form a helical membrane-spanning segment; that stretch reads YTAFFVGIMVQQIADLIIRK. The Cytoplasmic portion of the chain corresponds to 948-961; the sequence is TRRNSIFQQGLFRN. Ser952 is modified (phosphoserine; by PKA). A helical transmembrane segment spans residues 962 to 980; it reads KVIWVGITSQIIVALILSC. Residues 981–995 lie on the Lumenal side of the membrane; the sequence is GLGSITALNFTMLRV. A helical transmembrane segment spans residues 996–1016; that stretch reads QYWFVAVPHAILIWVYDEVRK. Residues 1017-1033 are Cytoplasmic-facing; sequence LFLRLYPGSWWDKNMYY.

It belongs to the cation transport ATPase (P-type) (TC 3.A.3) family. Type IIC subfamily. In terms of assembly, composed of two subunits: alpha (catalytic) and beta. As to expression, found in skin, kidney and distal colon.

It is found in the membrane. The enzyme catalyses K(+)(out) + ATP + H2O + H(+)(in) = K(+)(in) + ADP + phosphate + 2 H(+)(out). Functionally, catalyzes the hydrolysis of ATP coupled with the exchange of H(+) and K(+) ions across the plasma membrane. Responsible for potassium absorption in various tissues. The polypeptide is Potassium-transporting ATPase alpha chain 2 (ATP12A) (Cavia porcellus (Guinea pig)).